Here is a 1342-residue protein sequence, read N- to C-terminus: Putative aldehyde oxidase-like protein (1342 aa).

The disordered stretch occupies residues 1 to 23 (MSDCNSGGGERRPNARATDAPPV). Residues 221–408 (ISSPREGWYC…LSIFIPHWAS (188 aa)) enclose the FAD-binding PCMH-type domain.

This sequence belongs to the xanthine dehydrogenase family.

The chain is Putative aldehyde oxidase-like protein from Oryza sativa subsp. japonica (Rice).